Reading from the N-terminus, the 463-residue chain is NADH dehydrogenase [ubiquinone] iron-sulfur protein 2, mitochondrial (463 aa).

Residues 1–33 (MAALRALCRLRGAAAQVLRPGAGVRLPIQPSRG) constitute a mitochondrion transit peptide. Lys-62 is subject to N6-acetyllysine. Arg-118 bears the Symmetric dimethylarginine mark. Residues Cys-326, Cys-332, and Cys-347 each coordinate [4Fe-4S] cluster.

Belongs to the complex I 49 kDa subunit family. In terms of assembly, core subunit of respiratory chain NADH dehydrogenase (Complex I) which is composed of 45 different subunits. Component of the iron-sulfur (IP) fragment of the enzyme. Interacts with NDUFAF3. Interacts with NDUFAF7. Interacts with CERS2. [4Fe-4S] cluster is required as a cofactor. In terms of processing, dimethylation at Arg-118 by NDUFAF7 takes place after NDUFS2 assembles into the complex I, leading to stabilize the early intermediate complex.

It is found in the mitochondrion inner membrane. The catalysed reaction is a ubiquinone + NADH + 5 H(+)(in) = a ubiquinol + NAD(+) + 4 H(+)(out). Core subunit of the mitochondrial membrane respiratory chain NADH dehydrogenase (Complex I) which catalyzes electron transfer from NADH through the respiratory chain, using ubiquinone as an electron acceptor. Essential for the catalytic activity and assembly of complex I. Redox-sensitive, critical component of the oxygen-sensing pathway in the pulmonary vasculature which plays a key role in acute pulmonary oxygen-sensing and hypoxic pulmonary vasoconstriction. Plays an important role in carotid body sensing of hypoxia. Essential for glia-like neural stem and progenitor cell proliferation, differentiation and subsequent oligodendrocyte or neuronal maturation. The polypeptide is NADH dehydrogenase [ubiquinone] iron-sulfur protein 2, mitochondrial (NDUFS2) (Bos taurus (Bovine)).